A 491-amino-acid chain; its full sequence is MKNKEVIVNNYLNLENTYIKLPKKLFSEQNPSEVKSAKLEVFNESLASDLGLSEEFLQSDDGVAFFAGNKILEGTVPIAQAYAGHQFGHFTMLGDGRAILIGELKSQNGERFDIQLKGAGRTPYSRGGDGKATLGPMLREYIISEGMYGLGIPTTRSLAVVSTGEDVMREEILQGAVLTRIAKSHIRVGTFQFVSNWGTVEELKALADYTLNRHFKKAEYEGNPYIYLLNEVIKSQAKLISKWQLVGFIHGVMNTDNVTISGETIDYGPCAFMDVYDPDTVFSSIDIKGRYAYGNQPKIGAWNLARFAETLLPLLDKNLEVAVEIAQNSISKYSDLYNKYWYTGMRAKLGIFNEEEEDKKLIQSLLTIMKRFKSDYTNTFRNLTLGNLSDIDVFTSEEFKTWYELWKERLTRQDQSSEESNKLMKKNNPTVIPRNYRVEEALVAAVKDNDYCVMQRLLDVLKDPYDYSNMNEYYSTLPKSTSCAYKTYCGT.

ATP contacts are provided by G94, G96, R97, K117, D129, G130, R180, and R187. D256 acts as the Proton acceptor in catalysis. Mg(2+) is bound by residues N257 and D266. Residue D266 coordinates ATP.

It belongs to the SELO family. Mg(2+) serves as cofactor. Mn(2+) is required as a cofactor.

It catalyses the reaction L-seryl-[protein] + ATP = 3-O-(5'-adenylyl)-L-seryl-[protein] + diphosphate. The catalysed reaction is L-threonyl-[protein] + ATP = 3-O-(5'-adenylyl)-L-threonyl-[protein] + diphosphate. It carries out the reaction L-tyrosyl-[protein] + ATP = O-(5'-adenylyl)-L-tyrosyl-[protein] + diphosphate. The enzyme catalyses L-histidyl-[protein] + UTP = N(tele)-(5'-uridylyl)-L-histidyl-[protein] + diphosphate. It catalyses the reaction L-seryl-[protein] + UTP = O-(5'-uridylyl)-L-seryl-[protein] + diphosphate. The catalysed reaction is L-tyrosyl-[protein] + UTP = O-(5'-uridylyl)-L-tyrosyl-[protein] + diphosphate. Its function is as follows. Nucleotidyltransferase involved in the post-translational modification of proteins. It can catalyze the addition of adenosine monophosphate (AMP) or uridine monophosphate (UMP) to a protein, resulting in modifications known as AMPylation and UMPylation. This is Protein nucleotidyltransferase YdiU from Clostridium botulinum (strain Eklund 17B / Type B).